A 312-amino-acid polypeptide reads, in one-letter code: RNA pseudouridylate synthase domain-containing protein 1 (312 aa).

Met1 bears the N-acetylmethionine mark. The active site involves Asp67. The tract at residues 256–298 (ATPDPDPEDRGPRPGSPSALLPGPGRPPPPPTKPPETEAQRGP) is disordered. Pro residues predominate over residues 279-289 (PGRPPPPPTKP).

This sequence belongs to the pseudouridine synthase RluA family.

The protein is RNA pseudouridylate synthase domain-containing protein 1 (RPUSD1) of Homo sapiens (Human).